The primary structure comprises 878 residues: von Willebrand factor A domain-containing protein DDB_G0267758 (878 aa).

The 134-residue stretch at 36–169 folds into the VIT domain; it reads GLFLTENNKK…TVKITLTITS (134 aa). Residues 316–496 form the VWFA domain; the sequence is EFIFLIDCSG…ISLKPMFSNI (181 aa). Residues 595-623 show a composition bias toward low complexity; that stretch reads SSSSSSSSSSSSSSSSSSSSSSSSSSSSS. Disordered regions lie at residues 595-638 and 752-774; these read SSSS…HRLS and SVKKSKKSETKEETTKTTSSKTK. The span at 624–635 shows a compositional bias: polar residues; it reads TTTATTNQNQIH.

The protein is von Willebrand factor A domain-containing protein DDB_G0267758 of Dictyostelium discoideum (Social amoeba).